The primary structure comprises 428 residues: 3-phosphoshikimate 1-carboxyvinyltransferase (428 aa).

Positions 19, 20, and 24 each coordinate 3-phosphoshikimate. Lysine 19 is a phosphoenolpyruvate binding site. Phosphoenolpyruvate contacts are provided by glycine 91 and arginine 119. 4 residues coordinate 3-phosphoshikimate: serine 164, glutamine 166, aspartate 312, and lysine 339. Glutamine 166 serves as a coordination point for phosphoenolpyruvate. Residue aspartate 312 is the Proton acceptor of the active site. Phosphoenolpyruvate-binding residues include arginine 343 and arginine 386.

It belongs to the EPSP synthase family. As to quaternary structure, monomer.

The protein localises to the cytoplasm. The catalysed reaction is 3-phosphoshikimate + phosphoenolpyruvate = 5-O-(1-carboxyvinyl)-3-phosphoshikimate + phosphate. The protein operates within metabolic intermediate biosynthesis; chorismate biosynthesis; chorismate from D-erythrose 4-phosphate and phosphoenolpyruvate: step 6/7. Functionally, catalyzes the transfer of the enolpyruvyl moiety of phosphoenolpyruvate (PEP) to the 5-hydroxyl of shikimate-3-phosphate (S3P) to produce enolpyruvyl shikimate-3-phosphate and inorganic phosphate. The sequence is that of 3-phosphoshikimate 1-carboxyvinyltransferase from Bacillus pumilus (strain SAFR-032).